A 699-amino-acid polypeptide reads, in one-letter code: tRNA 5-methylaminomethyl-2-thiouridine biosynthesis bifunctional protein MnmC (699 aa).

The tract at residues 1–260 is tRNA (mnm(5)s(2)U34)-methyltransferase; the sequence is MTAKPHISCQ…ERKLLRQQAN (260 aa). Residues 282–699 are FAD-dependent cmnm(5)s(2)U34 oxidoreductase; sequence IGGGLASAHL…LRKLLKGKAL (418 aa).

This sequence in the N-terminal section; belongs to the methyltransferase superfamily. tRNA (mnm(5)s(2)U34)-methyltransferase family. The protein in the C-terminal section; belongs to the DAO family. The cofactor is FAD.

Its subcellular location is the cytoplasm. The enzyme catalyses 5-aminomethyl-2-thiouridine(34) in tRNA + S-adenosyl-L-methionine = 5-methylaminomethyl-2-thiouridine(34) in tRNA + S-adenosyl-L-homocysteine + H(+). Catalyzes the last two steps in the biosynthesis of 5-methylaminomethyl-2-thiouridine (mnm(5)s(2)U) at the wobble position (U34) in tRNA. Catalyzes the FAD-dependent demodification of cmnm(5)s(2)U34 to nm(5)s(2)U34, followed by the transfer of a methyl group from S-adenosyl-L-methionine to nm(5)s(2)U34, to form mnm(5)s(2)U34. The polypeptide is tRNA 5-methylaminomethyl-2-thiouridine biosynthesis bifunctional protein MnmC (Shewanella oneidensis (strain ATCC 700550 / JCM 31522 / CIP 106686 / LMG 19005 / NCIMB 14063 / MR-1)).